The chain runs to 248 residues: tRNA (guanine-N(1)-)-methyltransferase (248 aa).

Residues Gly-113 and 133-138 contribute to the S-adenosyl-L-methionine site; that span reads VGDYVL.

It belongs to the RNA methyltransferase TrmD family. Homodimer.

It localises to the cytoplasm. It catalyses the reaction guanosine(37) in tRNA + S-adenosyl-L-methionine = N(1)-methylguanosine(37) in tRNA + S-adenosyl-L-homocysteine + H(+). Functionally, specifically methylates guanosine-37 in various tRNAs. The sequence is that of tRNA (guanine-N(1)-)-methyltransferase from Shewanella sp. (strain W3-18-1).